A 295-amino-acid chain; its full sequence is GTPase Era (295 aa).

Positions Y5–E172 constitute an Era-type G domain. A G1 region spans residues G13–S20. G13–S20 contributes to the GTP binding site. Residues Q39 to Y43 form a G2 region. The interval D60–G63 is G3. GTP-binding positions include D60–L64 and N121–D124. The interval N121–D124 is G4. The segment at L151–A153 is G5. The KH type-2 domain maps to L203–S279.

It belongs to the TRAFAC class TrmE-Era-EngA-EngB-Septin-like GTPase superfamily. Era GTPase family. Monomer.

It localises to the cytoplasm. Its subcellular location is the cell inner membrane. An essential GTPase that binds both GDP and GTP, with rapid nucleotide exchange. Plays a role in 16S rRNA processing and 30S ribosomal subunit biogenesis and possibly also in cell cycle regulation and energy metabolism. This is GTPase Era from Coxiella burnetii (strain CbuG_Q212) (Coxiella burnetii (strain Q212)).